The chain runs to 386 residues: Succinate--CoA ligase [ADP-forming] subunit beta (386 aa).

The region spanning Lys-9–Glu-244 is the ATP-grasp domain. Residues Lys-46, Gly-53–Gly-55, Glu-99, Cys-102, and Glu-107 each bind ATP. Residues Asn-199 and Asp-213 each coordinate Mg(2+). Substrate contacts are provided by residues Asn-264 and Gly-321 to Met-323.

It belongs to the succinate/malate CoA ligase beta subunit family. Heterotetramer of two alpha and two beta subunits. The cofactor is Mg(2+).

The enzyme catalyses succinate + ATP + CoA = succinyl-CoA + ADP + phosphate. The catalysed reaction is GTP + succinate + CoA = succinyl-CoA + GDP + phosphate. It functions in the pathway carbohydrate metabolism; tricarboxylic acid cycle; succinate from succinyl-CoA (ligase route): step 1/1. Its function is as follows. Succinyl-CoA synthetase functions in the citric acid cycle (TCA), coupling the hydrolysis of succinyl-CoA to the synthesis of either ATP or GTP and thus represents the only step of substrate-level phosphorylation in the TCA. The beta subunit provides nucleotide specificity of the enzyme and binds the substrate succinate, while the binding sites for coenzyme A and phosphate are found in the alpha subunit. This Halalkalibacterium halodurans (strain ATCC BAA-125 / DSM 18197 / FERM 7344 / JCM 9153 / C-125) (Bacillus halodurans) protein is Succinate--CoA ligase [ADP-forming] subunit beta.